Here is a 204-residue protein sequence, read N- to C-terminus: Holliday junction resolvase RecU (204 aa).

Residues 1-24 (MTIHYPNGQQPVQHYNTHNELPTP) form a disordered region. Polar residues predominate over residues 7-24 (NGQQPVQHYNTHNELPTP). Mg(2+)-binding residues include Thr-87, Asp-89, Asp-102, and Gln-121.

Belongs to the RecU family. The cofactor is Mg(2+).

It is found in the cytoplasm. The catalysed reaction is Endonucleolytic cleavage at a junction such as a reciprocal single-stranded crossover between two homologous DNA duplexes (Holliday junction).. In terms of biological role, endonuclease that resolves Holliday junction intermediates in genetic recombination. Cleaves mobile four-strand junctions by introducing symmetrical nicks in paired strands. Promotes annealing of linear ssDNA with homologous dsDNA. Required for DNA repair, homologous recombination and chromosome segregation. This Limosilactobacillus reuteri (strain DSM 20016) (Lactobacillus reuteri) protein is Holliday junction resolvase RecU.